Reading from the N-terminus, the 434-residue chain is Angio-associated migratory cell protein (434 aa).

The segment at 1 to 63 (MESESESGAA…EEEEEEGNEE (63 aa)) is disordered. Residue S20 is modified to Phosphoserine. The span at 39 to 62 (DPDDLAQEMEDVDFEEEEEEEGNE) shows a compositional bias: acidic residues. WD repeat units follow at residues 89–129 (LHSA…LLFE), 132–171 (GHKD…EVWS), 173–212 (EAGD…KTFQ), 214–254 (PNCP…HVLK), 258–299 (GHQG…GVFR), 315–354 (SESN…LRHQ), 356–395 (QHQS…LLTD), and 398–433 (GHTA…QRPD).

In terms of tissue distribution, expressed in metastatic melanoma, liver, skin, kidney, heart, lung, lymph node, skeletal muscle and brain, and also in A2058 melanoma cells and activated T-cells (at protein level). Expressed in blood vessels. Strongly expressed in endothelial cells, cytotrophoblasts, and poorly differentiated. colon adenocarcinoma cells found in lymphatics.

The protein localises to the cell membrane. Its subcellular location is the cytoplasm. Its function is as follows. Plays a role in angiogenesis and cell migration. In smooth muscle cell migration, may act through the RhoA pathway. This is Angio-associated migratory cell protein (AAMP) from Homo sapiens (Human).